The sequence spans 226 residues: Sugar fermentation stimulation protein homolog (226 aa).

The protein belongs to the SfsA family.

The polypeptide is Sugar fermentation stimulation protein homolog (Clostridium beijerinckii (strain ATCC 51743 / NCIMB 8052) (Clostridium acetobutylicum)).